Reading from the N-terminus, the 208-residue chain is Large ribosomal subunit protein uL4 (208 aa).

The segment at 45 to 78 is disordered; the sequence is RQGTAKSKERSEMSGSTRKLGRQKGSGGARRGDI.

It belongs to the universal ribosomal protein uL4 family. As to quaternary structure, part of the 50S ribosomal subunit.

Functionally, one of the primary rRNA binding proteins, this protein initially binds near the 5'-end of the 23S rRNA. It is important during the early stages of 50S assembly. It makes multiple contacts with different domains of the 23S rRNA in the assembled 50S subunit and ribosome. In terms of biological role, forms part of the polypeptide exit tunnel. The sequence is that of Large ribosomal subunit protein uL4 from Azobacteroides pseudotrichonymphae genomovar. CFP2.